The chain runs to 241 residues: MELQFRQPHFSDALLLLLLSNLLLWEKASSIPACMAEKSGCWNPRMETFDSAIRKAETLRTVSKQFYVELYHNQFSSGKFATLTSKLVRRDEIVFRAASHCHSTLTNPPNKGIQYITIEIPEYLKTLINYVGAWISPLFHLVIELSAMKDVPETILSKAKEIEENNRQILRDLRWIITEVYPTSKKKEIFPSWELLSFLKSSSRNSKFLAMFNLSHCLEYDTQFFLFHLRILKCRITGKDC.

Positions 1 to 30 (MELQFRQPHFSDALLLLLLSNLLLWEKASS) are cleaved as a signal peptide. 3 disulfides stabilise this stretch: C34–C41, C101–C217, and C234–C241. A glycan (N-linked (GlcNAc...) asparagine) is linked at N213.

This sequence belongs to the somatotropin/prolactin family. Expressed specifically in the placenta. Predominantly expressed in spongiotrophoblast cells.

It is found in the secreted. The chain is Prolactin-8A8 (Prl8a8) from Mus musculus (Mouse).